The sequence spans 158 residues: MARGNDIERVVADNRKARHDYFIEETYEAGIALTGSEIKSIRAGQVNLRGGYVRIVDGEAWLYDVHIAPYEQSGAYFNHEPTRPRKLLLHRREISRIAGQVERQGYTLVPLRLYLRGRRAKVEIGLARGKKLYDKRDDIARREARRDIERALKERTRR.

Belongs to the SmpB family.

The protein localises to the cytoplasm. Its function is as follows. Required for rescue of stalled ribosomes mediated by trans-translation. Binds to transfer-messenger RNA (tmRNA), required for stable association of tmRNA with ribosomes. tmRNA and SmpB together mimic tRNA shape, replacing the anticodon stem-loop with SmpB. tmRNA is encoded by the ssrA gene; the 2 termini fold to resemble tRNA(Ala) and it encodes a 'tag peptide', a short internal open reading frame. During trans-translation Ala-aminoacylated tmRNA acts like a tRNA, entering the A-site of stalled ribosomes, displacing the stalled mRNA. The ribosome then switches to translate the ORF on the tmRNA; the nascent peptide is terminated with the 'tag peptide' encoded by the tmRNA and targeted for degradation. The ribosome is freed to recommence translation, which seems to be the essential function of trans-translation. In Roseiflexus sp. (strain RS-1), this protein is SsrA-binding protein.